Here is a 396-residue protein sequence, read N- to C-terminus: uncharacterized protein (396 aa).

11 helical membrane passes run 7-27 (SDDVWVLWGFIAVWAAVSIGL), 36-56 (AVSGAIIALAGAMVFTNVGVL), 62-82 (VYDTVWSYVVPLAIPLLLFQI), 94-114 (LLFIFLISSVGTVLGSILAFF), 159-179 (VVADNFMMALLFFILISIPAL), 218-238 (IAFNAGAAFALVAVSMKVSGY), 250-270 (GTLGDQYLVLTSLTVLIIFLF), 285-305 (TFLIYLFFVVIGIPADLRLIV), 310-330 (LILLFVFIIAISNLAVSLAAG), 340-360 (ILLAVNATVGGPTTAAAMAIA), and 367-387 (VAPIMLVGTLGYLIGNYVGTF).

It is found in the cell membrane. This is an uncharacterized protein from Bacillus subtilis (strain 168).